A 417-amino-acid chain; its full sequence is Serine hydroxymethyltransferase (417 aa).

(6S)-5,6,7,8-tetrahydrofolate is bound by residues Leu-121 and 125 to 127; that span reads GHL. Lys-229 is modified (N6-(pyridoxal phosphate)lysine). (6S)-5,6,7,8-tetrahydrofolate is bound at residue 355 to 357; sequence SPF.

The protein belongs to the SHMT family. In terms of assembly, homodimer. The cofactor is pyridoxal 5'-phosphate.

It is found in the cytoplasm. It catalyses the reaction (6R)-5,10-methylene-5,6,7,8-tetrahydrofolate + glycine + H2O = (6S)-5,6,7,8-tetrahydrofolate + L-serine. Its pathway is one-carbon metabolism; tetrahydrofolate interconversion. It participates in amino-acid biosynthesis; glycine biosynthesis; glycine from L-serine: step 1/1. Its function is as follows. Catalyzes the reversible interconversion of serine and glycine with tetrahydrofolate (THF) serving as the one-carbon carrier. This reaction serves as the major source of one-carbon groups required for the biosynthesis of purines, thymidylate, methionine, and other important biomolecules. Also exhibits THF-independent aldolase activity toward beta-hydroxyamino acids, producing glycine and aldehydes, via a retro-aldol mechanism. The protein is Serine hydroxymethyltransferase of Xanthomonas axonopodis pv. citri (strain 306).